The chain runs to 520 residues: Amphoterin-induced protein 2 (520 aa).

The signal sequence occupies residues 1–37; it reads MSLRFHTLPTLPRAVKPGCRELLCLLVIAVMVSPSSS. Residues 38–67 form the LRRNT domain; that stretch reads GLCPTACICATDIVSCTNKNLSKVPGNLFR. Residues 38–398 lie on the Extracellular side of the membrane; sequence GLCPTACICA…SHHAHEAFNT (361 aa). 2 disulfide bridges follow: Cys-40–Cys-46 and Cys-44–Cys-53. An N-linked (GlcNAc...) asparagine glycan is attached at Asn-57. LRR repeat units lie at residues 68–89, 93–114, 117–138, 141–162, 165–186, and 192–213; these read LIKR…WIPV, KLST…SFST, NLKC…MFQE, VLEV…AFGG, HLQK…LYVG, and DLTF…HINL. An N-linked (GlcNAc...) asparagine glycan is attached at Asn-103. In terms of domain architecture, LRRCT spans 227 to 283; the sequence is NPFVCDCSLYSLLTFWYRRHFNSVTDFKHDYTCRLWLDSRHSHQLLLLQDSFLNCSH. Cystine bridges form between Cys-231–Cys-259 and Cys-233–Cys-281. N-linked (GlcNAc...) asparagine glycans are attached at residues Asn-280, Asn-287, Asn-344, Asn-372, Asn-380, Asn-383, and Asn-387. Residues 288 to 378 enclose the Ig-like C2-type domain; that stretch reads GSFHALGFIH…RLLNETVDIM (91 aa). Cys-309 and Cys-362 are joined by a disulfide. A helical transmembrane segment spans residues 399 to 419; that stretch reads AFTTLAACVVSIVLVLLYLYL. Residues 420–520 lie on the Cytoplasmic side of the membrane; the sequence is TPCPCKCRDK…FSDTPFVAST (101 aa). Disordered regions lie at residues 437–458 and 498–520; these read QSNA…AEDR and SRAK…VAST.

This sequence belongs to the immunoglobulin superfamily. AMIGO family. Binds itself as well as AMIGO1 and AMIGO3. As to expression, highest levels in the lung. High levels in cerebellar granule neurons and Purkinje cells. Also in pyramidal cells between CA1 and CA3 regions of the hippocampus and granule cells of the dentate gyrus.

It is found in the cell membrane. The protein localises to the nucleus. Its function is as follows. Required for depolarization-dependent survival of cultured cerebellar granule neurons. May mediate homophilic as well as heterophilic cell-cell interaction with AMIGO1 or AMIGO3. May contribute to signal transduction through its intracellular domain. The chain is Amphoterin-induced protein 2 from Rattus norvegicus (Rat).